A 647-amino-acid polypeptide reads, in one-letter code: Epithelial sodium channel subunit beta (647 aa).

Over 1–57 (MIHGKMKRLKRYFTRALHRIQKGPGYTYKELLVWFCDNTNTHGPKRIIKEGPKKRVM) the chain is Cytoplasmic. Residues 58-78 (WFILTLVFAGLVFWQWGVLIL) form a helical membrane-spanning segment. The Extracellular segment spans residues 79 to 552 (TYLSYGVSVS…GGQFGFWMGG (474 aa)). 8 cysteine pairs are disulfide-bonded: C104-C291, C215-C222, C268-C275, C381-C468, C406-C464, C410-C460, C419-C446, and C421-C435. A helical membrane pass occupies residues 553–573 (SVLCIIEFGEIIIDCMWITIL). Residues 574–647 (KFLAWSRNRR…AEPVSSDEEN (74 aa)) are Cytoplasmic-facing. The tract at residues 586–647 (RKRPQYSDPP…AEPVSSDEEN (62 aa)) is disordered.

It belongs to the amiloride-sensitive sodium channel (TC 1.A.6) family. SCNN1B subfamily. In terms of assembly, component of the heterotrimeric epithelial sodium channel (ENaC) composed of an alpha/SCNN1A, a beta/SCNN1B and a gamma/SCNN1G subunit.

The protein resides in the apical cell membrane. It localises to the cytoplasmic vesicle membrane. It catalyses the reaction Na(+)(in) = Na(+)(out). With respect to regulation, originally identified and characterized by its inhibition by the diuretic drug amiloride. Functionally, this is one of the three pore-forming subunits of the heterotrimeric epithelial sodium channel (ENaC), a critical regulator of sodium balance and fluid homeostasis. ENaC operates in epithelial tissues, where it mediates the electrodiffusion of sodium ions from extracellular fluid through the apical membrane of cells, with water following osmotically. This Xenopus laevis (African clawed frog) protein is Epithelial sodium channel subunit beta (scnn1b-a).